A 591-amino-acid polypeptide reads, in one-letter code: METVEAGHDDVIGWFEHVSENACKVQSETLRRILELNSGVEYLRKWLGTVDVEKMDDYTLETLFTSLVPIVSHADLDPYIQRIADGETSPLLTQEPITVLSLSSGTTEGRQKYVPFTRHSAQTTLQIFRLSAAYRSRFYPIREGGRILEFIYAGKEFKTLGGLTVGTATTHYYASEEFKTKQETTKSFTCSPQEVISGGDFGQCTYCHLLLGLHYSSQVEFVASAFSYTIVQAFSFFEEIWREICADIKEGNLSSRITLPKMRKAVLALIRPNPSLASHIEEICLELETNLGWFGLISKLWPNAKFISSIMTGSMLPYLNKLRHYAGGLPLVSADYGSTESWIGVNVDPHLPPEDVSFAVIPTFSYFEFIPLYRRQNQSDICIDGDFVEDKPVPLSQVKLGQEYELVLTTFTGLYRYRLGDVVEVTSFHKGTPKLSFIYRRKLILTINIDKNTEKDLQRVVDKASQLLSRSTRAEVVDFTSHADVIARPGHYVIYWEIRGEADDKALEECCREMDTAFVDYGYVVSRRMNSIGPLELRVVERGTFGKVAERCVGKCGGLNQFKTPRCTTNSVMLDILNDSTIKRFRSSAYD.

This sequence belongs to the IAA-amido conjugating enzyme family. Expressed in cotyledons and hypocotyls.

In terms of biological role, catalyzes the synthesis of indole-3-acetic acid (IAA)-amino acid conjugates, providing a mechanism for the plant to cope with the presence of excess auxin. Involved in red light-specific hypocotyl elongation. May act downstream of a red light signal transduction and determine the degree of hypocotyl elongation. The protein is Indole-3-acetic acid-amido synthetase GH3.10 of Arabidopsis thaliana (Mouse-ear cress).